Here is a 94-residue protein sequence, read N- to C-terminus: Small ribosomal subunit protein uS19 (94 aa).

Belongs to the universal ribosomal protein uS19 family.

Functionally, protein S19 forms a complex with S13 that binds strongly to the 16S ribosomal RNA. The polypeptide is Small ribosomal subunit protein uS19 (Dictyoglomus turgidum (strain DSM 6724 / Z-1310)).